The primary structure comprises 368 residues: Solute carrier family 35 member G1 (368 aa).

10 consecutive transmembrane segments (helical) span residues 72-92 (GLGL…SLFV), 100-120 (AVEI…PCLI), 134-154 (LFLF…YYAF), 161-181 (DATV…WIFL), 190-210 (AFFT…PFIF), 225-245 (IKGT…LVIL), 256-276 (LSIW…LFVI), 289-309 (LFLI…TKAV), 316-336 (LVAI…IAFF), and 340-360 (PTWW…GATI). EamA domains lie at 83–205 (FLFS…LIVR) and 236–360 (VLAA…GATI).

The protein belongs to the TMEM20 family. Interacts with STIM1; stimulated by depletion of intracellular calcium. Interacts with ORAI1. Interacts with the plasma membrane calcium-transporting ATPases ATP2B1 and ATP2B4. Interacts with ATP1A1, ATP2A2, KPNB1 and XPO1.

It is found in the cell membrane. Its subcellular location is the endoplasmic reticulum membrane. Functionally, may play a role in intracellular calcium sensing and homeostasis. May act as a negative regulator of plasma membrane calcium-transporting ATPases preventing calcium efflux from the cell. The sequence is that of Solute carrier family 35 member G1 (Slc35g1) from Mus musculus (Mouse).